A 278-amino-acid polypeptide reads, in one-letter code: Glycyl-dTMP PLP-dependent decarboxylase (278 aa).

It belongs to the pyridoxal-phosphate-dependent aminodecarboxylase family.

It carries out the reaction 5-C(alpha)-glycyl-dTMP in DNA + H(+) = 5-aminoethyl-dUMP in DNA + CO2. Functionally, converts 5-Calpha-glycinylthymidine (Calpha-GlyT) into 5-aminoethyl-2'-deoxyuridine (5-NedU) as a step in the pathway leading to thymidine hypermodifications in the viral genome. As a final result of the pathway of hypermodification, 5-aminoethyl-2'-deoxyuridine (5-NedU) substitutes for about 30% of thymidines in the viral DNA. These modifications probably prevent degradation of viral genome by the host restriction-modification antiviral defense system. The sequence is that of Glycyl-dTMP PLP-dependent decarboxylase from Pseudomonas aeruginosa.